The following is a 183-amino-acid chain: Ribonuclease M5 (183 aa).

The Toprim domain occupies 6–90 (KEVIVVEGKD…AYISRVSGTK (85 aa)). E12, D59, and D61 together coordinate Mg(2+).

The protein belongs to the ribonuclease M5 family. It depends on Mg(2+) as a cofactor.

The protein localises to the cytoplasm. The enzyme catalyses Endonucleolytic cleavage of RNA, removing 21 and 42 nucleotides, respectively, from the 5'- and 3'-termini of a 5S-rRNA precursor.. In terms of biological role, required for correct processing of both the 5' and 3' ends of 5S rRNA precursor. Cleaves both sides of a double-stranded region yielding mature 5S rRNA in one step. This Fusobacterium nucleatum subsp. nucleatum (strain ATCC 25586 / DSM 15643 / BCRC 10681 / CIP 101130 / JCM 8532 / KCTC 2640 / LMG 13131 / VPI 4355) protein is Ribonuclease M5.